The sequence spans 233 residues: Small heat shock protein hspF (233 aa).

Residues 129–233 (IPLFTFFEPL…ILLITVNKFL (105 aa)) enclose the sHSP domain.

This sequence belongs to the small heat shock protein (HSP20) family.

This Dictyostelium discoideum (Social amoeba) protein is Small heat shock protein hspF (hspF-1).